We begin with the raw amino-acid sequence, 517 residues long: ATP synthase subunit beta (517 aa).

Low complexity-rich tracts occupy residues methionine 1–alanine 22 and alanine 29–alanine 42. The interval methionine 1 to alanine 42 is disordered. An ATP-binding site is contributed by glycine 195–threonine 202.

This sequence belongs to the ATPase alpha/beta chains family. In terms of assembly, F-type ATPases have 2 components, CF(1) - the catalytic core - and CF(0) - the membrane proton channel. CF(1) has five subunits: alpha(3), beta(3), gamma(1), delta(1), epsilon(1). CF(0) has three main subunits: a(1), b(2) and c(9-12). The alpha and beta chains form an alternating ring which encloses part of the gamma chain. CF(1) is attached to CF(0) by a central stalk formed by the gamma and epsilon chains, while a peripheral stalk is formed by the delta and b chains.

The protein localises to the cell inner membrane. It catalyses the reaction ATP + H2O + 4 H(+)(in) = ADP + phosphate + 5 H(+)(out). Produces ATP from ADP in the presence of a proton gradient across the membrane. The catalytic sites are hosted primarily by the beta subunits. The chain is ATP synthase subunit beta from Brucella anthropi (strain ATCC 49188 / DSM 6882 / CCUG 24695 / JCM 21032 / LMG 3331 / NBRC 15819 / NCTC 12168 / Alc 37) (Ochrobactrum anthropi).